The sequence spans 1344 residues: Myb-binding protein 1A (1344 aa).

The tract at residues 1 to 24 (MAEMKSPTKAEPATPAEAAQSDRH) is disordered. Ala2 carries the N-acetylalanine modification. The tract at residues 2-580 (AEMKSPTKAE…WDQMMSTLKE (579 aa)) is interaction with MYB. The span at 7-19 (PTKAEPATPAEAA) shows a compositional bias: low complexity. N6-acetyllysine occurs at positions 69 and 156. 2 short sequence motifs (nuclear export signal) span residues 238–256 (SEDN…ANSV) and 261–279 (KLPN…ESRF). 2 disordered regions span residues 710-751 (DEKQ…DKDV) and 1146-1344 (QRPK…VQTP). The span at 732–747 (SDMDSEDGEESEEEDR) shows a compositional bias: acidic residues. Basic and acidic residues predominate over residues 1148–1159 (PKSEKKNAKDIP). Residue Lys1149 forms a Glycyl lysine isopeptide (Lys-Gly) (interchain with G-Cter in SUMO2) linkage. Residues 1152 to 1344 (KKNAKDIPSD…RVASRRVQTP (193 aa)) form a required for nuclear and nucleolar localization region. 2 positions are modified to phosphoserine: Ser1160 and Ser1164. Basic residues predominate over residues 1168–1185 (TKRKKKGFLPETKKRKKL). The residue at position 1187 (Ser1187) is a Phosphoserine. The span at 1188–1202 (EGTTPEKNAASQQDA) shows a compositional bias: polar residues. The residue at position 1191 (Thr1191) is a Phosphothreonine. Phosphoserine occurs at positions 1219 and 1244. Over residues 1249–1258 (NPTLSPSTPA) the composition is skewed to polar residues. A Phosphothreonine modification is found at Thr1251. The residue at position 1253 (Ser1253) is a Phosphoserine. Phosphothreonine occurs at positions 1256 and 1277. A phosphoserine mark is found at Ser1280, Ser1303, and Ser1318. Low complexity predominate over residues 1317-1329 (LSLVSRSPSLLQS). Arg1322 is subject to Citrulline. 3 positions are modified to phosphoserine: Ser1323, Ser1325, and Ser1329.

Belongs to the MYBBP1A family. Component of the B-WICH complex, at least composed of SMARCA5/SNF2H, BAZ1B/WSTF, SF3B1, DEK, MYO1C, ERCC6, MYBBP1A and DDX21. Binds to and represses JUN and MYB via the leucine zipper regions present in these proteins. Also binds to and represses PPARGC1A: this interaction is abrogated when PPARGC1A is phosphorylated by MAPK1/ERK. Binds to and stimulates transcription by AHR. Binds to KPNA2. Interacts with CLOCK and CRY1. Post-translationally, citrullinated by PADI4. In terms of tissue distribution, ubiquitously expressed.

The protein localises to the nucleus. The protein resides in the nucleolus. Its subcellular location is the cytoplasm. Its function is as follows. May activate or repress transcription via interactions with sequence specific DNA-binding proteins. Repression may be mediated at least in part by histone deacetylase activity (HDAC activity). Acts as a corepressor and in concert with CRY1, represses the transcription of the core circadian clock component PER2. Preferentially binds to dimethylated histone H3 'Lys-9' (H3K9me2) on the PER2 promoter. Has a role in rRNA biogenesis together with PWP1. This Mus musculus (Mouse) protein is Myb-binding protein 1A (Mybbp1a).